A 359-amino-acid polypeptide reads, in one-letter code: Chorismate synthase (359 aa).

An NADP(+)-binding site is contributed by Arg47. FMN is bound by residues 123-125 (RSS), Gly283, 298-302 (KPTSS), and Arg326.

It belongs to the chorismate synthase family. In terms of assembly, homotetramer. It depends on FMNH2 as a cofactor.

The catalysed reaction is 5-O-(1-carboxyvinyl)-3-phosphoshikimate = chorismate + phosphate. Its pathway is metabolic intermediate biosynthesis; chorismate biosynthesis; chorismate from D-erythrose 4-phosphate and phosphoenolpyruvate: step 7/7. Functionally, catalyzes the anti-1,4-elimination of the C-3 phosphate and the C-6 proR hydrogen from 5-enolpyruvylshikimate-3-phosphate (EPSP) to yield chorismate, which is the branch point compound that serves as the starting substrate for the three terminal pathways of aromatic amino acid biosynthesis. This reaction introduces a second double bond into the aromatic ring system. The sequence is that of Chorismate synthase from Chlamydia abortus (strain DSM 27085 / S26/3) (Chlamydophila abortus).